The primary structure comprises 26 residues: Dermaseptin-J1 (26 aa).

V26 is modified (valine amide).

Expressed by the skin glands.

It localises to the secreted. In terms of biological role, has antimicrobial activity. The chain is Dermaseptin-J1 from Phasmahyla jandaia (Jandaia leaf frog).